Reading from the N-terminus, the 1123-residue chain is Alpha-mannosidase E (1123 aa).

A signal peptide spans Met-1 to Thr-21. N-linked (GlcNAc...) asparagine glycosylation is found at Asn-2 and Asn-38. Residues Phe-22–Leu-1072 lie on the Extracellular side of the membrane. Zn(2+) is bound by residues His-67 and Asp-69. An N-linked (GlcNAc...) asparagine glycan is attached at Asn-140. Zn(2+) contacts are provided by Asp-150 and His-409. The Nucleophile role is filled by Asp-150. Residues Asn-521, Asn-675, Asn-858, Asn-887, Asn-975, and Asn-990 are each glycosylated (N-linked (GlcNAc...) asparagine). Residues Ile-1073–Val-1093 traverse the membrane as a helical segment. Topologically, residues Ile-1094 to Pro-1123 are cytoplasmic.

It belongs to the glycosyl hydrolase 38 family. It depends on Zn(2+) as a cofactor.

The protein resides in the membrane. It catalyses the reaction Hydrolysis of terminal, non-reducing alpha-D-mannose residues in alpha-D-mannosides.. This Dictyostelium discoideum (Social amoeba) protein is Alpha-mannosidase E (manE).